A 209-amino-acid chain; its full sequence is Protein GET1 (209 aa).

Residues 1-3 (MSL) are Lumenal-facing. A helical membrane pass occupies residues 4–23 (LLVIFLLELVVQLVNTIGAK). The Cytoplasmic portion of the chain corresponds to 24–110 (TINNLLWRFY…SFSRKLTIYR (87 aa)). A coiled-coil region spans residues 74 to 101 (WARLQRKHDKLMDELEKKKSQLDAHRTS). Residues 111 to 131 (WILTRGMQWFLCFWFSSQPMF) traverse the membrane as a helical segment. Residues 132-155 (WLPYGWFPYWVEWLVSFPNAPMGS) are Lumenal-facing. Residues 156–172 (VSIVVWQSACSGVLALV) traverse the membrane as a helical segment. Residues 173-209 (IEAVMAVVRYTGGTGMQKQRQPVPAAGGAPGTSKKDL) lie on the Cytoplasmic side of the membrane. The disordered stretch occupies residues 188–209 (MQKQRQPVPAAGGAPGTSKKDL).

This sequence belongs to the WRB/GET1 family. In terms of assembly, interacts with GET3.

It is found in the endoplasmic reticulum membrane. Required for the post-translational delivery of tail-anchored (TA) proteins to the endoplasmic reticulum. Acts as a membrane receptor for soluble GET3, which recognizes and selectively binds the transmembrane domain of TA proteins in the cytosol. This is Protein GET1 from Chaetomium thermophilum (strain DSM 1495 / CBS 144.50 / IMI 039719) (Thermochaetoides thermophila).